The following is a 124-amino-acid chain: Ribonuclease pancreatic (124 aa).

Positions K1 to M13 are enriched in basic and acidic residues. A disordered region spans residues K1–N24. Residues K7 and R10 each contribute to the substrate site. H12 serves as the catalytic Proton acceptor. Intrachain disulfides connect C26-C84, C40-C95, C58-C110, and C65-C72. N-linked (GlcNAc...) asparagine; partial glycosylation occurs at N34. Residues K41 to T45, K66, and R85 contribute to the substrate site. H119 acts as the Proton donor in catalysis.

This sequence belongs to the pancreatic ribonuclease family. As to quaternary structure, monomer. Interacts with and forms tight 1:1 complexes with RNH1. Dimerization of two such complexes may occur. Interaction with RNH1 inhibits this protein. Pancreas.

It localises to the secreted. The enzyme catalyses an [RNA] containing cytidine + H2O = an [RNA]-3'-cytidine-3'-phosphate + a 5'-hydroxy-ribonucleotide-3'-[RNA].. It carries out the reaction an [RNA] containing uridine + H2O = an [RNA]-3'-uridine-3'-phosphate + a 5'-hydroxy-ribonucleotide-3'-[RNA].. Endonuclease that catalyzes the cleavage of RNA on the 3' side of pyrimidine nucleotides. Acts on single-stranded and double-stranded RNA. The chain is Ribonuclease pancreatic (RNASE1) from Aepyceros melampus (Impala).